Reading from the N-terminus, the 431-residue chain is 3-phosphoshikimate 1-carboxyvinyltransferase (431 aa).

3-phosphoshikimate is bound by residues lysine 26, serine 27, and arginine 31. A phosphoenolpyruvate-binding site is contributed by lysine 26. Residues glycine 99 and arginine 127 each coordinate phosphoenolpyruvate. Residues serine 170, serine 171, glutamine 172, serine 199, glutamate 314, and histidine 343 each coordinate 3-phosphoshikimate. A phosphoenolpyruvate-binding site is contributed by glutamine 172. Catalysis depends on glutamate 314, which acts as the Proton acceptor. Residues arginine 347, arginine 388, and lysine 413 each contribute to the phosphoenolpyruvate site.

The protein belongs to the EPSP synthase family. In terms of assembly, monomer.

It localises to the cytoplasm. It carries out the reaction 3-phosphoshikimate + phosphoenolpyruvate = 5-O-(1-carboxyvinyl)-3-phosphoshikimate + phosphate. It functions in the pathway metabolic intermediate biosynthesis; chorismate biosynthesis; chorismate from D-erythrose 4-phosphate and phosphoenolpyruvate: step 6/7. In terms of biological role, catalyzes the transfer of the enolpyruvyl moiety of phosphoenolpyruvate (PEP) to the 5-hydroxyl of shikimate-3-phosphate (S3P) to produce enolpyruvyl shikimate-3-phosphate and inorganic phosphate. The chain is 3-phosphoshikimate 1-carboxyvinyltransferase from Mycobacterium marinum (strain ATCC BAA-535 / M).